The following is a 371-amino-acid chain: tRNA-specific 2-thiouridylase MnmA (371 aa).

Residues 13-20 (GMSGGVDS) and methionine 39 contribute to the ATP site. The interaction with target base in tRNA stretch occupies residues 99–101 (NPD). Cysteine 104 acts as the Nucleophile in catalysis. A disulfide bridge connects residues cysteine 104 and cysteine 200. Glycine 128 contacts ATP. An interaction with tRNA region spans residues 150-152 (KDQ). Residue cysteine 200 is the Cysteine persulfide intermediate of the active site. Positions 308-309 (RY) are interaction with tRNA.

It belongs to the MnmA/TRMU family.

The protein resides in the cytoplasm. It catalyses the reaction S-sulfanyl-L-cysteinyl-[protein] + uridine(34) in tRNA + AH2 + ATP = 2-thiouridine(34) in tRNA + L-cysteinyl-[protein] + A + AMP + diphosphate + H(+). Functionally, catalyzes the 2-thiolation of uridine at the wobble position (U34) of tRNA, leading to the formation of s(2)U34. This chain is tRNA-specific 2-thiouridylase MnmA, found in Listeria welshimeri serovar 6b (strain ATCC 35897 / DSM 20650 / CCUG 15529 / CIP 8149 / NCTC 11857 / SLCC 5334 / V8).